Here is a 151-residue protein sequence, read N- to C-terminus: D-aminoacyl-tRNA deacylase (151 aa).

Positions 137–138 match the Gly-cisPro motif, important for rejection of L-amino acids motif; it reads GP.

This sequence belongs to the DTD family. Homodimer.

It localises to the cytoplasm. The catalysed reaction is glycyl-tRNA(Ala) + H2O = tRNA(Ala) + glycine + H(+). It carries out the reaction a D-aminoacyl-tRNA + H2O = a tRNA + a D-alpha-amino acid + H(+). Functionally, an aminoacyl-tRNA editing enzyme that deacylates mischarged D-aminoacyl-tRNAs. Also deacylates mischarged glycyl-tRNA(Ala), protecting cells against glycine mischarging by AlaRS. Acts via tRNA-based rather than protein-based catalysis; rejects L-amino acids rather than detecting D-amino acids in the active site. By recycling D-aminoacyl-tRNA to D-amino acids and free tRNA molecules, this enzyme counteracts the toxicity associated with the formation of D-aminoacyl-tRNA entities in vivo and helps enforce protein L-homochirality. The chain is D-aminoacyl-tRNA deacylase from Geobacter metallireducens (strain ATCC 53774 / DSM 7210 / GS-15).